We begin with the raw amino-acid sequence, 262 residues long: Hydroxyethylthiazole kinase (262 aa).

Methionine 50 contributes to the substrate binding site. Residues arginine 125 and threonine 171 each contribute to the ATP site. Glycine 198 contributes to the substrate binding site.

Belongs to the Thz kinase family. The cofactor is Mg(2+).

It carries out the reaction 5-(2-hydroxyethyl)-4-methylthiazole + ATP = 4-methyl-5-(2-phosphooxyethyl)-thiazole + ADP + H(+). Its pathway is cofactor biosynthesis; thiamine diphosphate biosynthesis; 4-methyl-5-(2-phosphoethyl)-thiazole from 5-(2-hydroxyethyl)-4-methylthiazole: step 1/1. Catalyzes the phosphorylation of the hydroxyl group of 4-methyl-5-beta-hydroxyethylthiazole (THZ). The protein is Hydroxyethylthiazole kinase of Escherichia coli O139:H28 (strain E24377A / ETEC).